The sequence spans 234 residues: Glucosamine-6-phosphate deaminase (234 aa).

The active-site Proton acceptor; for enolization step is Asp62. Asn128 (for ring-opening step) is an active-site residue. The Proton acceptor; for ring-opening step role is filled by His130. Glu135 serves as the catalytic For ring-opening step.

The protein belongs to the glucosamine/galactosamine-6-phosphate isomerase family. NagB subfamily.

It catalyses the reaction alpha-D-glucosamine 6-phosphate + H2O = beta-D-fructose 6-phosphate + NH4(+). The protein operates within amino-sugar metabolism; N-acetylneuraminate degradation; D-fructose 6-phosphate from N-acetylneuraminate: step 5/5. Functionally, catalyzes the reversible isomerization-deamination of glucosamine 6-phosphate (GlcN6P) to form fructose 6-phosphate (Fru6P) and ammonium ion. The chain is Glucosamine-6-phosphate deaminase from Streptococcus suis (strain 98HAH33).